The primary structure comprises 256 residues: tRNA-cytidine(32) 2-sulfurtransferase (256 aa).

The PP-loop motif signature appears at 35–40 (SGGKDS). C110, C113, and C201 together coordinate [4Fe-4S] cluster.

It belongs to the TtcA family. Homodimer. The cofactor is Mg(2+). Requires [4Fe-4S] cluster as cofactor.

The protein localises to the cytoplasm. The enzyme catalyses cytidine(32) in tRNA + S-sulfanyl-L-cysteinyl-[cysteine desulfurase] + AH2 + ATP = 2-thiocytidine(32) in tRNA + L-cysteinyl-[cysteine desulfurase] + A + AMP + diphosphate + H(+). The protein operates within tRNA modification. Functionally, catalyzes the ATP-dependent 2-thiolation of cytidine in position 32 of tRNA, to form 2-thiocytidine (s(2)C32). The sulfur atoms are provided by the cysteine/cysteine desulfurase (IscS) system. The chain is tRNA-cytidine(32) 2-sulfurtransferase from Coxiella burnetii (strain Dugway 5J108-111).